Reading from the N-terminus, the 269-residue chain is Tryptophan synthase alpha chain (269 aa).

Catalysis depends on proton acceptor residues E49 and D60.

Belongs to the TrpA family. In terms of assembly, tetramer of two alpha and two beta chains.

It catalyses the reaction (1S,2R)-1-C-(indol-3-yl)glycerol 3-phosphate + L-serine = D-glyceraldehyde 3-phosphate + L-tryptophan + H2O. Its pathway is amino-acid biosynthesis; L-tryptophan biosynthesis; L-tryptophan from chorismate: step 5/5. The alpha subunit is responsible for the aldol cleavage of indoleglycerol phosphate to indole and glyceraldehyde 3-phosphate. The chain is Tryptophan synthase alpha chain from Pseudomonas entomophila (strain L48).